The sequence spans 355 residues: C-C chemokine receptor type 1 (355 aa).

Over 1-34 (METPNTTEDYDTTTEFDYGDATPCQKVNERAFGA) the chain is Extracellular. Asn-5 carries an N-linked (GlcNAc...) asparagine glycan. 2 disulfide bridges follow: Cys-24-Cys-273 and Cys-106-Cys-183. The helical transmembrane segment at 35–60 (QLLPPLYSLVFVIGLVGNILVVLVLV) threads the bilayer. Topologically, residues 61 to 64 (QYKR) are cytoplasmic. Residues 65–91 (LKNMTSIYLLNLAISDLLFLFTLPFWI) form a helical membrane-spanning segment. Residues 92-107 (DYKLKDDWVFGDAMCK) are Extracellular-facing. A helical transmembrane segment spans residues 108-129 (ILSGFYYTGLYSEIFFIILLTI). Residues 130–146 (DRYLAIVHAVFALRART) are Cytoplasmic-facing. Residues 147–171 (VTFGVITSIIIWALAILASMPGLYF) traverse the membrane as a helical segment. The Extracellular portion of the chain corresponds to 172–197 (SKTQWEFTHHTCSLHFPHESLREWKL). The chain crosses the membrane as a helical span at residues 198–223 (FQALKLNLFGLVLPLLVMIICYTGII). The Cytoplasmic portion of the chain corresponds to 224–239 (KILLRRPNEKKSKAVR). The helical transmembrane segment at 240-264 (LIFVIMIIFFLFWTPYNLTILISVF) threads the bilayer. The Extracellular portion of the chain corresponds to 265-281 (QDFLFTHECEQSRHLDL). Residues 282-305 (AVQVTEVIAYTHCCVNPVIYAFVG) form a helical membrane-spanning segment. Residues 306-355 (ERFRKYLRQLFHRRVAVHLVKWLPFLSVDRLERVSSTSPSTGEHELSAGF) are Cytoplasmic-facing.

This sequence belongs to the G-protein coupled receptor 1 family. Interacts with CREB3. Interacts with CCL3. Interacts with CCL15. Interacts with CCL23. Interacts with GNAI1. Interacts with PF4/CXCL4. In terms of tissue distribution, widely expressed in different hematopoietic cells.

The protein localises to the cell membrane. Chemokine receptor that plays a crucial role in regulating immune cell migration, inflammation, and immune responses. Contributes to the inflammatory response by recruiting immune cells, such as monocytes, macrophages, T-cells, and dendritic cells, to sites of inflammation for the clearance of pathogens and the resolution of tissue damage. When activated by its ligands including CCL3, CCL5-9, CCL13-16 and CCL23, triggers a signaling cascade within immune cells, leading to their migration towards the source of the chemokine. For example, mediates neutrophil migration after activation by CCL3 leading to the sequential release of TNF-alpha and leukotriene B4. Also mediates monocyte migration upon CXCL4 binding. Activation by CCL5 results in neuroinflammation through the ERK1/2 signaling pathway. In Homo sapiens (Human), this protein is C-C chemokine receptor type 1 (CCR1).